The sequence spans 347 residues: Transcription factor JunB (347 aa).

Glycyl lysine isopeptide (Lys-Gly) (interchain with G-Cter in SUMO2) cross-links involve residues Lys4, Lys33, and Lys36. The interval 51-73 (KAPGARGPGPEGGGGGSYFSGQG) is disordered. A compositionally biased stretch (gly residues) spans 56–68 (RGPGPEGGGGGSY). Lys81 is covalently cross-linked (Glycyl lysine isopeptide (Lys-Gly) (interchain with G-Cter in SUMO2)). Thr102 and Thr104 each carry phosphothreonine. Position 117 is a phosphoserine (Ser117). Lys141 is covalently cross-linked (Glycyl lysine isopeptide (Lys-Gly) (interchain with G-Cter in SUMO2)). Positions 239 to 253 (FKEEPQTVPEARSRD) are enriched in basic and acidic residues. Residues 239 to 260 (FKEEPQTVPEARSRDATPPVSP) are disordered. At Lys240 the chain carries N6-acetyllysine; alternate. Residue Lys240 forms a Glycyl lysine isopeptide (Lys-Gly) (interchain with G-Cter in SUMO1); alternate linkage. Lys240 participates in a covalent cross-link: Glycyl lysine isopeptide (Lys-Gly) (interchain with G-Cter in SUMO2); alternate. Position 251 is a phosphoserine (Ser251). A Phosphothreonine modification is found at Thr255. Position 259 is a phosphoserine (Ser259). Residues 268-295 (RIKVERKRLRNRLAATKCRKRKLERIAR) are basic motif. The region spanning 268–331 (RIKVERKRLR…AQLKQKVMTH (64 aa)) is the bZIP domain. Residues 296–324 (LEDKVKTLKAENAGLSSTAGLLREQVAQL) form a leucine-zipper region. Lys343 participates in a covalent cross-link: Glycyl lysine isopeptide (Lys-Gly) (interchain with G-Cter in SUMO2).

This sequence belongs to the bZIP family. Jun subfamily. In terms of assembly, binds DNA as a homodimer or as a heterodimer with another member of the Jun/Fos family. Component of an AP-1 transcription factor complex composed of JUN-FOS heterodimers composed of JUN-FOS heterodimers. As part of the AP-1 transcription factor complex, forms heterodimers with FOSB, thereby binding to the AP-1 consensus sequence and stimulating transcription. Interacts with ITCH (via its WW domains). In terms of processing, ubiquitinated by ITCH, leading to its degradation.

It localises to the nucleus. Transcription factor involved in regulating gene activity following the primary growth factor response. Binds to the DNA sequence 5'-TGA[GC]TCA-3'. Heterodimerizes with proteins of the FOS family to form an AP-1 transcription complex, thereby enhancing its DNA binding activity to an AP-1 consensus sequence and its transcriptional activity. The protein is Transcription factor JunB (JUNB) of Homo sapiens (Human).